The sequence spans 141 residues: Hemoglobin subunit alpha-A (141 aa).

In terms of domain architecture, Globin spans 1–141 (VLSGSDKTNV…VGNVLTAKYR (141 aa)). His58 is a binding site for O2. Residue His87 participates in heme b binding.

Belongs to the globin family. Heterotetramer of two alpha chains and two beta chains. Red blood cells.

Involved in oxygen transport from the lung to the various peripheral tissues. The protein is Hemoglobin subunit alpha-A (HBAA) of Vultur gryphus (Andean condor).